The primary structure comprises 269 residues: 4-hydroxy-tetrahydrodipicolinate reductase (269 aa).

NAD(+) is bound by residues 8–13 (GAGGRM) and glutamate 34. Position 35 (arginine 35) interacts with NADP(+). Residues 98 to 100 (GTT) and 122 to 125 (ASNY) contribute to the NAD(+) site. Catalysis depends on histidine 155, which acts as the Proton donor/acceptor. Histidine 156 contributes to the (S)-2,3,4,5-tetrahydrodipicolinate binding site. Residue lysine 159 is the Proton donor of the active site. 165 to 166 (GT) contacts (S)-2,3,4,5-tetrahydrodipicolinate.

It belongs to the DapB family.

Its subcellular location is the cytoplasm. The catalysed reaction is (S)-2,3,4,5-tetrahydrodipicolinate + NAD(+) + H2O = (2S,4S)-4-hydroxy-2,3,4,5-tetrahydrodipicolinate + NADH + H(+). The enzyme catalyses (S)-2,3,4,5-tetrahydrodipicolinate + NADP(+) + H2O = (2S,4S)-4-hydroxy-2,3,4,5-tetrahydrodipicolinate + NADPH + H(+). The protein operates within amino-acid biosynthesis; L-lysine biosynthesis via DAP pathway; (S)-tetrahydrodipicolinate from L-aspartate: step 4/4. Catalyzes the conversion of 4-hydroxy-tetrahydrodipicolinate (HTPA) to tetrahydrodipicolinate. This Haemophilus ducreyi (strain 35000HP / ATCC 700724) protein is 4-hydroxy-tetrahydrodipicolinate reductase.